A 360-amino-acid chain; its full sequence is MTTISAPSEPYRAVRWWLISVAALIALMVLVGGATRLTESGLSIVEWKLVTGSLPPLSAAQWTEAFEAYKKIPQYRELNAGMSLSEFKEIFWWEWSHRLLGRFIGVAYLLPFLFFLWRGGLSRELKRRLWLLFALGGLQGAVGWWMVASGLSERVEVSQYRLATHLVLALLIFAGIVWTVRRLKERAQIAAPARLRFTSALLLVVTFVQIYLGALVAGLRAGRAYNTWPEIDGALIPSAERLWFETPWWRNMFDNVLTVQFEHRMTAYALFVLAALHAFDAVRSRAGLAASGALWLFAAVSLQAVLGILTLLNQVPIGLALAHQAVAIAVLTLAVMQTERLASRQSAETQPRVVPVSQPG.

The next 5 membrane-spanning stretches (helical) occupy residues Ala-13 to Gly-33, Leu-99 to Gly-119, Leu-129 to Ser-149, Tyr-160 to Val-180, and Ser-199 to Leu-219. His-263 contacts heme. The next 3 helical transmembrane spans lie at Met-265–Val-282, Gly-292–Leu-312, and Val-315–Val-335. His-323 serves as a coordination point for heme.

This sequence belongs to the COX15/CtaA family. Type 2 subfamily. Interacts with CtaB. Heme b is required as a cofactor.

The protein resides in the cell membrane. It catalyses the reaction Fe(II)-heme o + 2 A + H2O = Fe(II)-heme a + 2 AH2. Its pathway is porphyrin-containing compound metabolism; heme A biosynthesis; heme A from heme O: step 1/1. In terms of biological role, catalyzes the conversion of heme O to heme A by two successive hydroxylations of the methyl group at C8. The first hydroxylation forms heme I, the second hydroxylation results in an unstable dihydroxymethyl group, which spontaneously dehydrates, resulting in the formyl group of heme A. This Bradyrhizobium diazoefficiens (strain JCM 10833 / BCRC 13528 / IAM 13628 / NBRC 14792 / USDA 110) protein is Heme A synthase.